Reading from the N-terminus, the 213-residue chain is Glycerol-3-phosphate acyltransferase (213 aa).

5 helical membrane-spanning segments follow: residues 3-23, 51-71, 78-98, 115-135, and 140-160; these read ILLA…VVVS, KAAI…VWLA, DVAV…PVFF, AVHP…AFFF, and LAAL…FGTP.

It belongs to the PlsY family. As to quaternary structure, probably interacts with PlsX.

The protein resides in the cell inner membrane. The enzyme catalyses an acyl phosphate + sn-glycerol 3-phosphate = a 1-acyl-sn-glycero-3-phosphate + phosphate. It functions in the pathway lipid metabolism; phospholipid metabolism. Catalyzes the transfer of an acyl group from acyl-phosphate (acyl-PO(4)) to glycerol-3-phosphate (G3P) to form lysophosphatidic acid (LPA). This enzyme utilizes acyl-phosphate as fatty acyl donor, but not acyl-CoA or acyl-ACP. This Burkholderia cenocepacia (strain ATCC BAA-245 / DSM 16553 / LMG 16656 / NCTC 13227 / J2315 / CF5610) (Burkholderia cepacia (strain J2315)) protein is Glycerol-3-phosphate acyltransferase.